The primary structure comprises 327 residues: Beta-ketoacyl-[acyl-carrier-protein] synthase III (327 aa).

Active-site residues include Cys-112 and His-253. The segment at 254–258 is ACP-binding; the sequence is QANER. Asn-283 is an active-site residue.

This sequence belongs to the thiolase-like superfamily. FabH family. In terms of assembly, homodimer.

The protein localises to the cytoplasm. The enzyme catalyses malonyl-[ACP] + acetyl-CoA + H(+) = 3-oxobutanoyl-[ACP] + CO2 + CoA. The protein operates within lipid metabolism; fatty acid biosynthesis. Catalyzes the condensation reaction of fatty acid synthesis by the addition to an acyl acceptor of two carbons from malonyl-ACP. Catalyzes the first condensation reaction which initiates fatty acid synthesis and may therefore play a role in governing the total rate of fatty acid production. Possesses both acetoacetyl-ACP synthase and acetyl transacylase activities. Its substrate specificity determines the biosynthesis of branched-chain and/or straight-chain of fatty acids. The polypeptide is Beta-ketoacyl-[acyl-carrier-protein] synthase III (Chlamydia trachomatis serovar A (strain ATCC VR-571B / DSM 19440 / HAR-13)).